We begin with the raw amino-acid sequence, 263 residues long: Ubiquinone/menaquinone biosynthesis C-methyltransferase UbiE (263 aa).

3 residues coordinate S-adenosyl-L-methionine: T86, D107, and S152.

Belongs to the class I-like SAM-binding methyltransferase superfamily. MenG/UbiE family.

The catalysed reaction is a 2-demethylmenaquinol + S-adenosyl-L-methionine = a menaquinol + S-adenosyl-L-homocysteine + H(+). It catalyses the reaction a 2-methoxy-6-(all-trans-polyprenyl)benzene-1,4-diol + S-adenosyl-L-methionine = a 5-methoxy-2-methyl-3-(all-trans-polyprenyl)benzene-1,4-diol + S-adenosyl-L-homocysteine + H(+). The protein operates within quinol/quinone metabolism; menaquinone biosynthesis; menaquinol from 1,4-dihydroxy-2-naphthoate: step 2/2. It functions in the pathway cofactor biosynthesis; ubiquinone biosynthesis. Functionally, methyltransferase required for the conversion of demethylmenaquinol (DMKH2) to menaquinol (MKH2) and the conversion of 2-polyprenyl-6-methoxy-1,4-benzoquinol (DDMQH2) to 2-polyprenyl-3-methyl-6-methoxy-1,4-benzoquinol (DMQH2). This Brucella anthropi (strain ATCC 49188 / DSM 6882 / CCUG 24695 / JCM 21032 / LMG 3331 / NBRC 15819 / NCTC 12168 / Alc 37) (Ochrobactrum anthropi) protein is Ubiquinone/menaquinone biosynthesis C-methyltransferase UbiE.